The chain runs to 249 residues: Proteasome subunit alpha type-3 (249 aa).

N-acetylserine is present on serine 2. 2 positions are modified to O-acetylserine: serine 214 and serine 220. Lysine 221 participates in a covalent cross-link: Glycyl lysine isopeptide (Lys-Gly) (interchain with G-Cter in ubiquitin).

The protein belongs to the peptidase T1A family. In terms of assembly, component of the 20S core complex of the 26S proteasome. The 26S proteasome is composed of a core protease (CP), known as the 20S proteasome, capped at one or both ends by the 19S regulatory particle (RP/PA700). The 20S proteasome core is composed of 28 subunits that are arranged in four stacked rings, resulting in a barrel-shaped structure. The two end rings are each formed by seven alpha subunits, and the two central rings are each formed by seven beta subunits. The catalytic chamber with the active sites is on the inside of the barrel. In terms of tissue distribution, ubiquitous low levels.

Its subcellular location is the cytoplasm. The protein resides in the nucleus. Functionally, the proteasome is a multicatalytic proteinase complex which is characterized by its ability to cleave peptides with Arg, Phe, Tyr, Leu, and Glu adjacent to the leaving group at neutral or slightly basic pH. The proteasome has an ATP-dependent proteolytic activity. The chain is Proteasome subunit alpha type-3 (PAG1) from Arabidopsis thaliana (Mouse-ear cress).